A 278-amino-acid chain; its full sequence is Envelope glycoprotein L (278 aa).

The first 30 residues, Met-1–Ser-30, serve as a signal peptide directing secretion. In terms of domain architecture, gL betaherpesvirus-type spans Val-43–Glu-256. A disulfide bridge connects residues Cys-154 and Cys-159.

Belongs to the herpesviridae glycoprotein L (gL) family. Betaherpesvirinae gL subfamily. As to quaternary structure, interacts with glycoprotein H (gH); this interaction is necessary for the correct processing and cell surface expression of gH. Forms the envelope pentamer complex (PC) composed of gH, gL, UL128, UL130, and UL131A. The pentamer interacts with host NRP2. Forms the envelope trimer complex composed of gH, gL, and gO. The trimer interacts with host PDGFRA. The trimer also interacts with host EPHA2.

The protein localises to the virion membrane. Its subcellular location is the host cell membrane. It is found in the host Golgi apparatus. The protein resides in the host trans-Golgi network. In terms of biological role, the heterodimer glycoprotein H-glycoprotein L is required for the fusion of viral and plasma membranes leading to virus entry into the host cell. Acts as a functional inhibitor of gH and maintains gH in an inhibited form. Upon binding to host integrins, gL dissociates from gH leading to activation of the viral fusion glycoproteins gB and gH. In human cytomegalovirus, forms two distincts complexes to mediate viral entry, a trimer and a pentamer at the surface of the virion envelope. The gH-gL-gO trimer is required for infection in fibroblasts by interacting with host PDGFRA, and in glioblastoma cells by interacting with host EPHA2. The gH-gL-UL128-UL130-UL131A pentamer is essential for viral entry in epithelial, endothelial and myeloid cells via interaction with host NRP2. This Homo sapiens (Human) protein is Envelope glycoprotein L.